The sequence spans 63 residues: uncharacterized protein (63 aa).

This is an uncharacterized protein from Enterobacteria phage T4 (Bacteriophage T4).